Reading from the N-terminus, the 367-residue chain is Queuine tRNA-ribosyltransferase (367 aa).

Asp-89 (proton acceptor) is an active-site residue. Substrate contacts are provided by residues Asp-89 to Phe-93, Asp-143, Gln-187, and Gly-214. Positions Gly-245–Asp-251 are RNA binding. The active-site Nucleophile is the Asp-264. Positions Thr-269 to Arg-273 are RNA binding; important for wobble base 34 recognition. Zn(2+) contacts are provided by Cys-302, Cys-304, Cys-307, and His-333.

It belongs to the queuine tRNA-ribosyltransferase family. In terms of assembly, homodimer. Within each dimer, one monomer is responsible for RNA recognition and catalysis, while the other monomer binds to the replacement base PreQ1. Zn(2+) serves as cofactor.

The catalysed reaction is 7-aminomethyl-7-carbaguanine + guanosine(34) in tRNA = 7-aminomethyl-7-carbaguanosine(34) in tRNA + guanine. The protein operates within tRNA modification; tRNA-queuosine biosynthesis. In terms of biological role, catalyzes the base-exchange of a guanine (G) residue with the queuine precursor 7-aminomethyl-7-deazaguanine (PreQ1) at position 34 (anticodon wobble position) in tRNAs with GU(N) anticodons (tRNA-Asp, -Asn, -His and -Tyr). Catalysis occurs through a double-displacement mechanism. The nucleophile active site attacks the C1' of nucleotide 34 to detach the guanine base from the RNA, forming a covalent enzyme-RNA intermediate. The proton acceptor active site deprotonates the incoming PreQ1, allowing a nucleophilic attack on the C1' of the ribose to form the product. After dissociation, two additional enzymatic reactions on the tRNA convert PreQ1 to queuine (Q), resulting in the hypermodified nucleoside queuosine (7-(((4,5-cis-dihydroxy-2-cyclopenten-1-yl)amino)methyl)-7-deazaguanosine). The protein is Queuine tRNA-ribosyltransferase of Nitrosospira multiformis (strain ATCC 25196 / NCIMB 11849 / C 71).